The sequence spans 1294 residues: MSYLREVATAVALLLPFILLNKFWRPNSKDSIVNDDDDSTSEVDAISDSTNPSGSFPSVEYEVFLSFRGPDTREQFTDFLYQSLRRYKIHTFRDDDELLKGKEIGPNLLRAIDQSKIYVPIISSGYADSKWCLMELAEIVRRQEEDPRRIILPIFYMVDPSDVRHQTGCYKKAFRKHANKFDGQTIQNWKDALKKVGDLKGWHIGKNDKQGAIADKVSADIWSHISKENLILETDELVGIDDHITAVLEKLSLDSENVTMVGLYGMGGIGKTTTAKAVYNKISSCFDCCCFIDNIRETQEKDGVVVLQKKLVSEILRIDSGSVGFNNDSGGRKTIKERVSRFKILVVLDDVDEKFKFEDMLGSPKDFISQSRFIITSRSMRVLGTLNENQCKLYEVGSMSKPRSLELFSKHAFKKNTPPSYYETLANDVVDTTAGLPLTLKVIGSLLFKQEIAVWEDTLEQLRRTLNLDEVYDRLKISYDALNPEAKEIFLDIACFFIGQNKEEPYYMWTDCNFYPASNIIFLIQRCMIQVGDDDEFKMHDQLRDMGREIVRREDVLPWKRSRIWSAEEGIDLLLNKKGSSKVKAISIPWGVKYEFKSECFLNLSELRYLHAREAMLTGDFNNLLPNLKWLELPFYKHGEDDPPLTNYTMKNLIIVILEHSHITADDWGGWRHMMKMAERLKVVRLASNYSLYGRRVRLSDCWRFPKSIEVLSMTAIEMDEVDIGELKKLKTLVLKFCPIQKISGGTFGMLKGLRELCLEFNWGTNLREVVADIGQLSSLKVLKTTGAKEVEINEFPLGLKELSTSSRIPNLSQLLDLEVLKVYDCKDGFDMPPASPSEDESSVWWKVSKLKSLQLEKTRINVNVVDDASSGGHLPRYLLPTSLTYLKIYQCTEPTWLPGIENLENLTSLEVNDIFQTLGGDLDGLQGLRSLEILRIRKVNGLARIKGLKDLLCSSTCKLRKFYITECPDLIELLPCELGGQTVVVPSMAELTIRDCPRLEVGPMIRSLPKFPMLKKLDLAVANITKEEDLDAIGSLEELVSLELELDDTSSGIERIVSSSKLQKLTTLVVKVPSLREIEGLEELKSLQDLYLEGCTSLGRLPLEKLKELDIGGCPDLTELVQTVVAVPSLRGLTIRDCPRLEVGPMIQSLPKFPMLNELTLSMVNITKEDELEVLGSLEELDSLELTLDDTCSSIERISFLSKLQKLTTLIVEVPSLREIEGLAELKSLRILYLEGCTSLERLWPDQQQLGSLKNLNVLDIQGCKSLSVDHLSALKTTLPPRARITWPDQPYR.

Positions Met1–Lys29 are cleaved as a signal peptide. Positions Asn34–Gly54 are disordered. Residues Val59 to Ile221 enclose the TIR domain. Residues Arg68–Arg73 and Gly101 contribute to the NAD(+) site. The active site involves Glu135. An NB-ARC domain is found at Asp241–Asp480. 11 LRR repeats span residues Ala246–Gly268, Leu468–Asp492, Leu604–Leu625, Pro626–Met650, Leu904–Gly928, Phe1012–Glu1039, Leu1063–Leu1085, Lys1086–Glu1109, Leu1179–Ser1203, Leu1205–Ser1229, and Leu1254–Thr1278.

This sequence belongs to the disease resistance TIR-NB-LRR family. In terms of assembly, homooligomer; homooligomerization is required for activity.

The enzyme catalyses NAD(+) + H2O = ADP-D-ribose + nicotinamide + H(+). The catalysed reaction is NADP(+) + H2O = ADP-D-ribose 2'-phosphate + nicotinamide + H(+). It carries out the reaction NAD(+) = 2'cADPR + nicotinamide + H(+). Functionally, TIR-NB-LRR receptor-like protein that confers resistance to the flax rust phytopathogenic fungus (M.lini). An NAD(+) hydrolase (NADase): in response to activation, catalyzes cleavage of NAD(+) into ADP-D-ribose (ADPR) and nicotinamide; NAD(+) cleavage triggering a defense system that promotes cell death. Also able to hydrolyze NADP(+), but not other NAD(+)-related molecules. Makes small amounts of 2' cyclic ADPR (2'cADPR). This chain is Disease resistance protein L6, found in Linum usitatissimum (Flax).